The following is a 605-amino-acid chain: UvrABC system protein C (605 aa).

Residues 14–92 enclose the GIY-YIG domain; the sequence is QSCGVYKMVG…IKSLKPLYNI (79 aa). Positions 202–237 constitute a UVR domain; that stretch reads KEVKEQLLFTMRKCSSEENYELAAIYRDRVKFLEQI.

It belongs to the UvrC family. Interacts with UvrB in an incision complex.

Its subcellular location is the cytoplasm. The UvrABC repair system catalyzes the recognition and processing of DNA lesions. UvrC both incises the 5' and 3' sides of the lesion. The N-terminal half is responsible for the 3' incision and the C-terminal half is responsible for the 5' incision. In Wolbachia pipientis wMel, this protein is UvrABC system protein C.